Reading from the N-terminus, the 251-residue chain is Gamma-interferon-inducible lysosomal thiol reductase (251 aa).

A signal peptide spans 1 to 21 (MFGFRLSVLLFAVCSLSACSC). The region spanning 22 to 60 (MFVNSCKYPPSQWCDSRDIAAQCGVLEQCMKFNASPVTV) is the Saposin A-type domain. Cysteines 68 and 71 form a disulfide. Residue Asn108 is glycosylated (N-linked (GlcNAc...) asparagine).

This sequence belongs to the GILT family. Dimer; disulfide-linked. In terms of tissue distribution, highly expressed in spleen and kidney. Also detected at lower levels in liver, heart, brain, intestine and gill.

It localises to the secreted. The protein resides in the lysosome. Its function is as follows. Lysosomal thiol reductase that can reduce protein disulfide bonds. May facilitate the complete unfolding of proteins destined for lysosomal degradation. Plays an important role in antigen processing. In Carassius auratus (Goldfish), this protein is Gamma-interferon-inducible lysosomal thiol reductase.